A 130-amino-acid polypeptide reads, in one-letter code: Small ribosomal subunit protein uS9 (130 aa).

The protein belongs to the universal ribosomal protein uS9 family.

The sequence is that of Small ribosomal subunit protein uS9 from Pseudoalteromonas atlantica (strain T6c / ATCC BAA-1087).